A 1057-amino-acid chain; its full sequence is Self-sufficient cytochrome P450 monooxygenase CYP505E3 (1057 aa).

Cys-403 provides a ligand contact to heme. The interval 465 to 488 (PSAAPFSSHARETTNASLPASPGT) is disordered. The region spanning 494–634 (MYVLYGSNTG…AFEAWETKLW (141 aa)) is the Flavodoxin-like domain. Residues 500 to 504 (SNTGT) and 578 to 610 (VFGC…QRLV) contribute to the FMN site. One can recognise an FAD-binding FR-type domain in the interval 671-900 (HDAALGTVIE…RASNAAFHLP (230 aa)).

It in the N-terminal section; belongs to the cytochrome P450 family. The cofactor is FAD. FMN serves as cofactor. Heme is required as a cofactor.

It carries out the reaction 2 oxidized [cytochrome P450] + NADPH = 2 reduced [cytochrome P450] + NADP(+) + H(+). The catalysed reaction is an organic molecule + reduced [NADPH--hemoprotein reductase] + O2 = an alcohol + oxidized [NADPH--hemoprotein reductase] + H2O + H(+). The enzyme catalyses dodecan-1-ol + reduced [NADPH--hemoprotein reductase] + O2 = 1,5-dodecanediol + oxidized [NADPH--hemoprotein reductase] + H2O + H(+). It catalyses the reaction dodecan-1-ol + reduced [NADPH--hemoprotein reductase] + O2 = 1,6-dodecanediol + oxidized [NADPH--hemoprotein reductase] + H2O + H(+). Self-sufficient cytochrome P450 monooxygenase that catalyzes the regioselective in-chain hydroxylation of fatty alcohols (C9-15) as well as fatty acids (C9-15) at the omega-1 to omega-7 or omega-1 to omega-6 positions, respectively. Is also able to convert naphthalene to 1-naphthol and 1-naphthol further to 1,3-dihydroxynaphthalene. The protein is Self-sufficient cytochrome P450 monooxygenase CYP505E3 of Phanerodontia chrysosporium (White-rot fungus).